The chain runs to 343 residues: N-acetyl-gamma-glutamyl-phosphate reductase (343 aa).

C152 is a catalytic residue.

It belongs to the NAGSA dehydrogenase family. Type 1 subfamily.

It localises to the cytoplasm. It carries out the reaction N-acetyl-L-glutamate 5-semialdehyde + phosphate + NADP(+) = N-acetyl-L-glutamyl 5-phosphate + NADPH + H(+). The protein operates within amino-acid biosynthesis; L-arginine biosynthesis; N(2)-acetyl-L-ornithine from L-glutamate: step 3/4. In terms of biological role, catalyzes the NADPH-dependent reduction of N-acetyl-5-glutamyl phosphate to yield N-acetyl-L-glutamate 5-semialdehyde. This chain is N-acetyl-gamma-glutamyl-phosphate reductase, found in Methanopyrus kandleri (strain AV19 / DSM 6324 / JCM 9639 / NBRC 100938).